We begin with the raw amino-acid sequence, 153 residues long: Nucleoside diphosphate kinase (153 aa).

The ATP site is built by lysine 13, phenylalanine 61, arginine 89, threonine 95, arginine 106, and asparagine 116. Catalysis depends on histidine 119, which acts as the Pros-phosphohistidine intermediate.

This sequence belongs to the NDK family. Requires Mg(2+) as cofactor.

The protein localises to the cytoplasm. It localises to the cell membrane. It catalyses the reaction a 2'-deoxyribonucleoside 5'-diphosphate + ATP = a 2'-deoxyribonucleoside 5'-triphosphate + ADP. The enzyme catalyses a ribonucleoside 5'-diphosphate + ATP = a ribonucleoside 5'-triphosphate + ADP. In terms of biological role, major role in the synthesis of nucleoside triphosphates other than ATP. The ATP gamma phosphate is transferred to the NDP beta phosphate via a ping-pong mechanism, using a phosphorylated active-site intermediate. This Gallus gallus (Chicken) protein is Nucleoside diphosphate kinase.